We begin with the raw amino-acid sequence, 213 residues long: Large ribosomal subunit protein uL1 (213 aa).

This sequence belongs to the universal ribosomal protein uL1 family. In terms of assembly, part of the 50S ribosomal subunit.

Functionally, binds directly to 23S rRNA. Probably involved in E site tRNA release. Its function is as follows. Protein L1 is also a translational repressor protein, it controls the translation of its operon by binding to its mRNA. This chain is Large ribosomal subunit protein uL1, found in Methanoculleus marisnigri (strain ATCC 35101 / DSM 1498 / JR1).